Here is a 155-residue protein sequence, read N- to C-terminus: Ribosome maturation factor RimP (155 aa).

The protein belongs to the RimP family.

The protein resides in the cytoplasm. Functionally, required for maturation of 30S ribosomal subunits. This is Ribosome maturation factor RimP from Staphylococcus carnosus (strain TM300).